A 164-amino-acid chain; its full sequence is FMN reductase (NADH) RutF (164 aa).

This sequence belongs to the non-flavoprotein flavin reductase family. RutF subfamily.

It carries out the reaction FMNH2 + NAD(+) = FMN + NADH + 2 H(+). Its function is as follows. Catalyzes the reduction of FMN to FMNH2 which is used to reduce pyrimidine by RutA via the Rut pathway. This chain is FMN reductase (NADH) RutF, found in Enterobacter cloacae subsp. cloacae (strain ATCC 13047 / DSM 30054 / NBRC 13535 / NCTC 10005 / WDCM 00083 / NCDC 279-56).